A 206-amino-acid chain; its full sequence is Peptidyl-tRNA hydrolase (206 aa).

Y19 provides a ligand contact to tRNA. Catalysis depends on H24, which acts as the Proton acceptor. Residues F70, N72, and N118 each coordinate tRNA.

This sequence belongs to the PTH family. In terms of assembly, monomer.

It is found in the cytoplasm. The enzyme catalyses an N-acyl-L-alpha-aminoacyl-tRNA + H2O = an N-acyl-L-amino acid + a tRNA + H(+). Its function is as follows. Hydrolyzes ribosome-free peptidyl-tRNAs (with 1 or more amino acids incorporated), which drop off the ribosome during protein synthesis, or as a result of ribosome stalling. Functionally, catalyzes the release of premature peptidyl moieties from peptidyl-tRNA molecules trapped in stalled 50S ribosomal subunits, and thus maintains levels of free tRNAs and 50S ribosomes. This is Peptidyl-tRNA hydrolase from Synechococcus sp. (strain CC9902).